Reading from the N-terminus, the 1279-residue chain is Mediator of DNA damage checkpoint protein 1 (1279 aa).

Residues 1 to 22 form a disordered region; sequence MENTQVIDWDAEEEEETEISSG. The interaction with CHEK2 stretch occupies residues 1–150; it reads MENTQVIDWD…PRSLLTIEKT (150 aa). An interaction with the MRN complex region spans residues 2 to 222; sequence ENTQVIDWDA…SSPFGLGSDT (221 aa). At threonine 4 the chain carries Phosphothreonine. The segment covering 9–18 has biased composition (acidic residues); that stretch reads WDAEEEEETE. An FHA domain is found at 54 to 105; sequence NVVGRSPDCSVALPFPSISKQHAVIEISAWNKAPILQDCGSLNGTQIVKPPR. At threonine 146 the chain carries Phosphothreonine. Disordered regions lie at residues 156–394, 409–634, and 714–744; these read RSQN…EEVS, LWSG…KHAK, and ETSE…PVPT. 2 positions are modified to phosphoserine: serine 168 and serine 176. Polar residues predominate over residues 179–192; sequence SVANGSRNTASPSA. Phosphoserine occurs at positions 198 and 220. Phosphothreonine is present on threonine 222. A compositionally biased stretch (basic and acidic residues) spans 264–277; sequence TKDKFKDTKMKEEA. Low complexity predominate over residues 278-292; the sequence is GSAGVPVGSVVEGSP. Serine 298 is subject to Phosphoserine. The residue at position 300 (threonine 300) is a Phosphothreonine. At serine 314 the chain carries Phosphoserine. Residue threonine 316 is modified to Phosphothreonine. 2 positions are modified to phosphoserine: serine 350 and serine 354. Threonine 356 is modified (phosphothreonine). Phosphoserine occurs at positions 372 and 380. A compositionally biased stretch (acidic residues) spans 381 to 393; that stretch reads DTDEEERGEEEEV. At threonine 382 the chain carries Phosphothreonine. Phosphoserine occurs at positions 394, 411, 421, 434, and 438. The segment covering 421-435 has biased composition (polar residues); the sequence is SQPQVLVERSQSASG. Threonine 440 carries the phosphothreonine modification. Serine 457 is modified (phosphoserine). Threonine 466 is modified (phosphothreonine). Serine 488, serine 489, serine 550, serine 587, and serine 589 each carry phosphoserine. Residues 545-561 are compositionally biased toward polar residues; sequence QEGSSSPVADIRMSQQP. Residues 620–634 show a composition bias toward basic and acidic residues; the sequence is GREREAHVGGTKHAK. 2 positions are modified to phosphoserine: serine 730 and serine 745. Position 764 is an N6-acetyllysine (lysine 764). A disordered region spans residues 772 to 1086; that stretch reads QMMPDGKASG…TKPNQEAAAP (315 aa). Phosphoserine occurs at positions 793, 801, and 824. Residues 798–817 show a composition bias toward low complexity; the sequence is ASASPQSLLTSQSQKQSTPQ. Polar residues-rich tracts occupy residues 862–889, 901–929, and 942–956; these read TCPT…STRT, QPST…TSVN, and PLTS…NLNP. Position 889 is a phosphothreonine (threonine 889). Position 951 is a phosphothreonine (threonine 951). Lysine 991 participates in a covalent cross-link: Glycyl lysine isopeptide (Lys-Gly) (interchain with G-Cter in SUMO2). Positions 994 to 1014 are enriched in low complexity; it reads STPAEPEPQSSASQSSGASEA. Residues serine 1008, serine 1009, serine 1012, and serine 1016 each carry the phosphoserine modification. Residues 1032 to 1047 show a composition bias toward basic and acidic residues; it reads VVKEEDPGEIQVKEEP. A Glycyl lysine isopeptide (Lys-Gly) (interchain with G-Cter in SUMO1); alternate cross-link involves residue lysine 1034. A Glycyl lysine isopeptide (Lys-Gly) (interchain with G-Cter in SUMO2); alternate cross-link involves residue lysine 1034. Residue threonine 1054 is modified to Phosphothreonine. BRCT domains follow at residues 1085–1163 and 1184–1275; these read APKV…DYLV and RERR…FVLS.

As to quaternary structure, homodimer. Interacts with H2AX, which requires phosphorylation of H2AX on 'Ser-139'. Interacts with the MRN complex, composed of MRE11, RAD50, and NBN. Interacts with CHEK2, which requires ATM-mediated phosphorylation of 'Thr-68' within the FHA domain of CHEK2. Interacts constitutively with the BRCA1-BARD1 complex, SMC1A and TP53BP1. Interacts with ATM and FANCD2, and these interactions are reduced upon DNA damage. Also interacts with the PRKDC complex, composed of XRCC6/KU70, XRCC5/KU80 and PRKDC/XRCC7. This interaction may be required for PRKDC autophosphorylation, which is essential for DNA double strand break (DSB) repair. When phosphorylated by ATM, interacts with RNF8 (via FHA domain). Interacts with CEP164. When phosphorylated, interacts with APTX (via FHA-like domain). Interacts (when phosphorylated) with TOPBP1; promoting TOPBP1 localization to DNA damage sites during mitosis. Interacts (when phosphorylated) with NBN; promoting NBN and MRN complex localization to DNA damage sites. Phosphorylated upon exposure to ionizing radiation (IR), ultraviolet radiation (UV), and hydroxyurea (HU). Phosphorylation in response to IR requires ATM, NBN, and possibly CHEK2. Also phosphorylated during the G2/M phase of the cell cycle and during activation of the mitotic spindle checkpoint. Phosphorylation at Thr-4 by ATM stabilizes and enhances homodimerization via the FHA domain. Phosphorylated at Ser-168 and Ser-198 by CK2 in response to DNA damage during mitosis, promoting interaction with TOPBP1. Phosphorylated by CK2 in response to DNA damage, promoting interaction with NBN and recruitment of the MRN complex to DNA damage sites. Post-translationally, sumoylation at Lys-1034 by PIAS4 following DNA damage promotes ubiquitin-mediated degradation. In terms of processing, ubiquitinated by RNF4, leading to proteasomal degradation; undergoes 'Lys-48'-linked polyubiquitination.

It is found in the nucleus. It localises to the chromosome. Its function is as follows. Histone reader protein required for checkpoint-mediated cell cycle arrest in response to DNA damage within both the S phase and G2/M phases of the cell cycle. Specifically recognizes and binds histone H2AX phosphorylated at 'Ser-139', a marker of DNA damage, serving as a scaffold for the recruitment of DNA repair and signal transduction proteins to discrete foci of DNA damage sites. Also required for downstream events subsequent to the recruitment of these proteins. These include phosphorylation and activation of the ATM, CHEK1 and CHEK2 kinases, and stabilization of TP53/p53 and apoptosis. ATM and CHEK2 may also be activated independently by a parallel pathway mediated by TP53BP1. Required for chromosomal stability during mitosis by promoting recruitment of TOPBP1 to DNA double strand breaks (DSBs): TOPBP1 forms filamentous assemblies that bridge MDC1 and tether broken chromosomes during mitosis. Required for the repair of DSBs via homologous recombination by promoting recruitment of NBN component of the MRN complex to DSBs. The chain is Mediator of DNA damage checkpoint protein 1 (Mdc1) from Rattus norvegicus (Rat).